The primary structure comprises 755 residues: Tryptophan 2-monooxygenase (755 aa).

FMN is bound by residues Ser-247, Glu-267, Lys-275, and Arg-295. Residue Arg-295 participates in substrate binding.

It belongs to the tryptophan 2-monooxygenase family. The cofactor is FMN.

It catalyses the reaction L-tryptophan + O2 = indole-3-acetamide + CO2 + H2O. The protein operates within plant hormone metabolism; auxin biosynthesis. This chain is Tryptophan 2-monooxygenase (iaaM), found in Agrobacterium vitis (Rhizobium vitis).